The sequence spans 94 residues: Long neurotoxin LNTX1 (94 aa).

The N-terminal stretch at 1-21 is a signal peptide; that stretch reads MKILLLTLVVVTIMCLDLGYT. 5 disulfides stabilise this stretch: C24–C43, C36–C64, C49–C53, C68–C79, and C80–C85.

This sequence belongs to the three-finger toxin family. Long-chain subfamily. Type II alpha-neurotoxin sub-subfamily. As to quaternary structure, monomer. In terms of tissue distribution, expressed by the venom gland.

Its subcellular location is the secreted. Functionally, binds with high affinity to muscular (alpha-1/CHRNA1) and neuronal (alpha-7/CHRNA7) nicotinic acetylcholine receptor (nAChR) and inhibits acetylcholine from binding to the receptor, thereby impairing neuromuscular and neuronal transmission. Recombinant LNTX1 leads to a functional block of the muscle-type acetylcholine receptors. Has a cytotoxic activity. The polypeptide is Long neurotoxin LNTX1 (Ophiophagus hannah (King cobra)).